The chain runs to 414 residues: uncharacterized protein (414 aa).

The interval Leu204–Asp230 is disordered. Residues Asp220–Asp230 are compositionally biased toward basic and acidic residues.

This sequence belongs to the CdaR family.

This is an uncharacterized protein from Mycobacterium tuberculosis (strain CDC 1551 / Oshkosh).